The chain runs to 344 residues: N-acetyl-gamma-glutamyl-phosphate reductase (344 aa).

Residue cysteine 150 is part of the active site.

The protein belongs to the NAGSA dehydrogenase family. Type 1 subfamily.

It localises to the cytoplasm. The catalysed reaction is N-acetyl-L-glutamate 5-semialdehyde + phosphate + NADP(+) = N-acetyl-L-glutamyl 5-phosphate + NADPH + H(+). Its pathway is amino-acid biosynthesis; L-arginine biosynthesis; N(2)-acetyl-L-ornithine from L-glutamate: step 3/4. Functionally, catalyzes the NADPH-dependent reduction of N-acetyl-5-glutamyl phosphate to yield N-acetyl-L-glutamate 5-semialdehyde. The polypeptide is N-acetyl-gamma-glutamyl-phosphate reductase (Pseudomonas putida (strain W619)).